The chain runs to 99 residues: N(2)-fixation sustaining protein CowN (99 aa).

It belongs to the CowN family.

Functionally, is required to sustain N(2)-dependent growth in the presence of low levels of carbon monoxide (CO). Probably acts by protecting the N(2) fixation ability of the nitrogenase complex, which is inactivated in the presence of CO. The polypeptide is N(2)-fixation sustaining protein CowN (Magnetococcus marinus (strain ATCC BAA-1437 / JCM 17883 / MC-1)).